The primary structure comprises 314 residues: 2-dehydro-3-deoxygluconokinase (314 aa).

Substrate is bound by residues 28–32, tyrosine 88, 102–104, and arginine 170; these read GDTLN and YWR. Residues 168 to 170, 228 to 233, and 260 to 263 contribute to the ATP site; these read NYR, KCGKNG, and SAGD. Aspartate 263 serves as a coordination point for substrate. The Proton acceptor role is filled by aspartate 263.

This sequence belongs to the carbohydrate kinase PfkB family.

It catalyses the reaction 2-dehydro-3-deoxy-D-gluconate + ATP = 2-dehydro-3-deoxy-6-phospho-D-gluconate + ADP + H(+). The protein operates within carbohydrate acid metabolism; 2-dehydro-3-deoxy-D-gluconate degradation; D-glyceraldehyde 3-phosphate and pyruvate from 2-dehydro-3-deoxy-D-gluconate: step 1/2. In terms of biological role, catalyzes the phosphorylation of 2-keto-3-deoxygluconate (KDG) to produce 2-keto-3-deoxy-6-phosphogluconate (KDPG). The chain is 2-dehydro-3-deoxygluconokinase (kdgK) from Haemophilus influenzae (strain ATCC 51907 / DSM 11121 / KW20 / Rd).